The sequence spans 218 residues: Capsid protein (218 aa).

At Met-1 the chain carries N-acetylmethionine; by host. Residues 1–29 (MDKSESTSAGRNHRRRPRRGSRSAPSSAD) form a disordered region. Residues 11–21 (RNHRRRPRRGS) show a composition bias toward basic residues.

Belongs to the cucumovirus capsid protein family.

Its subcellular location is the virion. In terms of biological role, capsid protein. Probably binds RNA and plays a role in packaging. The sequence is that of Capsid protein from Cucumber mosaic virus (strain C) (CMV).